The chain runs to 516 residues: Exodeoxyribonuclease 7 large subunit (516 aa).

The protein belongs to the XseA family. Heterooligomer composed of large and small subunits.

The protein localises to the cytoplasm. The catalysed reaction is Exonucleolytic cleavage in either 5'- to 3'- or 3'- to 5'-direction to yield nucleoside 5'-phosphates.. Bidirectionally degrades single-stranded DNA into large acid-insoluble oligonucleotides, which are then degraded further into small acid-soluble oligonucleotides. The protein is Exodeoxyribonuclease 7 large subunit of Chlamydia trachomatis serovar L2 (strain ATCC VR-902B / DSM 19102 / 434/Bu).